The sequence spans 393 residues: MANRRSLFSLSLIFVFMINSAIASPLTYNVASLGAKADGKTDSTKAFLSAWAKACASMNPGVIYVPAGTFFLRDVVFSGPCKNNAITFRIAGTLVAPSDYRVIGNAANWIFFHHVNGVTISGGILDGQGTALWACKACHGESCPSGATTLGFSDSNNIVVSGLASLNSQMFHIVINDFQNVQMQGVRVSRSGNSPNTDGIHVQMSSGVTILNSKIATGDDCVSIGPGTSNLWIEGVACGPGHGISIGSLGKEQEEAGVQNVTVKTVTFSGTQNGLRIKSWGRPSTGFARNILFQHATMVNVENPIVIDQHYCPDNKGCPGQVSGVQISDVTYEDIHGTSATEVAVKFDCSPKHPCREIKLEDVKLTYKNQAAESSCSHADGTTEGVVQPTSCL.

An N-terminal signal peptide occupies residues 1–23 (MANRRSLFSLSLIFVFMINSAIA). PbH1 repeat units follow at residues 115-136 (VNGVTISGGILDGQGTALWACK), 178-204 (FQNVQMQGVRVSRSGNSPNTDGIHVQM), 205-226 (SSGVTILNSKIATGDDCVSIGP), 228-248 (TSNLWIEGVACGPGHGISIGS), 258-279 (VQNVTVKTVTFSGTQNGLRIKS), and 288-309 (ARNILFQHATMVNVENPIVIDQ). The active-site Proton donor is aspartate 219. Cysteine 221 and cysteine 238 are oxidised to a cystine. Histidine 242 is an active-site residue. N-linked (GlcNAc...) asparagine glycosylation occurs at asparagine 260. Cystine bridges form between cysteine 349–cysteine 355 and cysteine 376–cysteine 392.

Belongs to the glycosyl hydrolase 28 family.

It localises to the secreted. The protein resides in the cell wall. It carries out the reaction (1,4-alpha-D-galacturonosyl)n+m + H2O = (1,4-alpha-D-galacturonosyl)n + (1,4-alpha-D-galacturonosyl)m.. In terms of biological role, acts in concert with the pectinesterase, in the ripening process. Is involved in cell wall metabolism, specifically in polyuronide degradation. This chain is Polygalacturonase, found in Prunus persica (Peach).